A 302-amino-acid polypeptide reads, in one-letter code: Protein FdhE homolog (302 aa).

This sequence belongs to the FdhE family.

The protein localises to the cytoplasm. Its function is as follows. Necessary for formate dehydrogenase activity. This is Protein FdhE homolog from Shewanella oneidensis (strain ATCC 700550 / JCM 31522 / CIP 106686 / LMG 19005 / NCIMB 14063 / MR-1).